The following is a 352-amino-acid chain: Pejvakin (352 aa).

This sequence belongs to the gasdermin family. Interacts with MAP1LC3B; interaction is direct. Interacts with IQGAP1. Interacts with ROCK2. Interacts with TRIOBP. In terms of tissue distribution, in ear, it is detected in the organ of Corti and the spiral ganglion within the cochlea in the sensory areas of the vestibule (cristae ampullares of the semicircular ducts, and maculae of the saccule and utricle) and in the first 3 relays (cochlear nuclei, superior olivary complex and inferior colliculus) of the afferent auditory pathway. Detected in hair cells of the cochlea and vestibule but not in neurons. In the afferent auditory pathway, it is present in the cell bodies of neurons but not in fiber bundles such as the trapezoid body in the brainstem. Also detected in spiral ganglion cells, which form the auditory nerve and project to the cochlear nuclei in the brainstem. Also present in the cochlear nuclei, the superior olive and the inferior colliculus (at protein level). Expressed in all the adult organs tested: brain, eye, inner ear, heart, lung, kidney, liver, intestine, testis and weakly in skeletal muscle.

It localises to the peroxisome membrane. It is found in the cell projection. The protein resides in the cilium. Functionally, peroxisome-associated protein required to protect auditory hair cells against noise-induced damage. Acts by regulating noise-induced peroxisome proliferation in auditory hair cells and neurons, and promoting autophagic degradation of damaged peroxisomes (pexophagy). Noise overexposure increases reactive oxygen species (ROS) levels, causing oxidative damage to auditory hair cells and resulting in hearing loss. PJVK acts as a ROS sensor that recruits the autophagy machinery to trigger pexophagy of peroxisomes damaged by oxidative stress. In addition to pexophagy, also required to promote peroxisome proliferation in response to sound overstimulation. This Mus musculus (Mouse) protein is Pejvakin.